Consider the following 1026-residue polypeptide: Beta-galactosidase (1026 aa).

Residues Asn104 and Asp203 each coordinate substrate. Asp203 contributes to the Na(+) binding site. Residues Glu418, His420, and Glu463 each contribute to the Mg(2+) site. Substrate-binding positions include Glu463 and 539–542 (EYAH). Catalysis depends on Glu463, which acts as the Proton donor. Residue Glu539 is the Nucleophile of the active site. Asn599 provides a ligand contact to Mg(2+). Na(+)-binding residues include Phe603 and Asn606. Substrate contacts are provided by Asn606 and Trp1002.

This sequence belongs to the glycosyl hydrolase 2 family. Homotetramer. Requires Mg(2+) as cofactor. The cofactor is Na(+).

The catalysed reaction is Hydrolysis of terminal non-reducing beta-D-galactose residues in beta-D-galactosides.. This Erwinia tasmaniensis (strain DSM 17950 / CFBP 7177 / CIP 109463 / NCPPB 4357 / Et1/99) protein is Beta-galactosidase.